The sequence spans 138 residues: ATP synthase epsilon chain, chloroplastic (138 aa).

It belongs to the ATPase epsilon chain family. In terms of assembly, F-type ATPases have 2 components, CF(1) - the catalytic core - and CF(0) - the membrane proton channel. CF(1) has five subunits: alpha(3), beta(3), gamma(1), delta(1), epsilon(1). CF(0) has three main subunits: a, b and c.

Its subcellular location is the plastid. It localises to the chloroplast thylakoid membrane. Produces ATP from ADP in the presence of a proton gradient across the membrane. In Staurastrum punctulatum (Green alga), this protein is ATP synthase epsilon chain, chloroplastic.